Here is a 100-residue protein sequence, read N- to C-terminus: Small ribosomal subunit protein bS18 (100 aa).

The disordered stretch occupies residues 1–23; that stretch reads MTFIRKPAGQAKPQKYSTDAYGR.

It belongs to the bacterial ribosomal protein bS18 family. Part of the 30S ribosomal subunit. Forms a tight heterodimer with protein bS6.

Binds as a heterodimer with protein bS6 to the central domain of the 16S rRNA, where it helps stabilize the platform of the 30S subunit. This is Small ribosomal subunit protein bS18 from Endomicrobium trichonymphae.